The following is a 158-amino-acid chain: SsrA-binding protein (158 aa).

The protein belongs to the SmpB family.

The protein resides in the cytoplasm. In terms of biological role, required for rescue of stalled ribosomes mediated by trans-translation. Binds to transfer-messenger RNA (tmRNA), required for stable association of tmRNA with ribosomes. tmRNA and SmpB together mimic tRNA shape, replacing the anticodon stem-loop with SmpB. tmRNA is encoded by the ssrA gene; the 2 termini fold to resemble tRNA(Ala) and it encodes a 'tag peptide', a short internal open reading frame. During trans-translation Ala-aminoacylated tmRNA acts like a tRNA, entering the A-site of stalled ribosomes, displacing the stalled mRNA. The ribosome then switches to translate the ORF on the tmRNA; the nascent peptide is terminated with the 'tag peptide' encoded by the tmRNA and targeted for degradation. The ribosome is freed to recommence translation, which seems to be the essential function of trans-translation. This is SsrA-binding protein from Bartonella henselae (strain ATCC 49882 / DSM 28221 / CCUG 30454 / Houston 1) (Rochalimaea henselae).